Reading from the N-terminus, the 388-residue chain is Na(+)/H(+) antiporter NhaA (388 aa).

The Cytoplasmic segment spans residues Met1–Asp11. Residues Ala12–Ser31 form a helical membrane-spanning segment. The Periplasmic segment spans residues Gly32 to Asn58. The chain crosses the membrane as a helical span at residues Met59 to Lys80. Over Arg81–Phe96 the chain is Cytoplasmic. Residues Pro97–Asn116 form a helical membrane-spanning segment. The Periplasmic portion of the chain corresponds to Tyr117–Thr122. A helical membrane pass occupies residues Arg123 to Ala130. Topologically, residues Ala131 to Ile154 are cytoplasmic. Residues Phe155–Thr176 traverse the membrane as a helical segment. Topologically, residues Asn177–Ser180 are periplasmic. A helical membrane pass occupies residues Met181 to Cys200. The Cytoplasmic portion of the chain corresponds to Gly201–Arg204. The helical transmembrane segment at Thr205–Ser222 threads the bilayer. A topological domain (periplasmic) is located at residue Gly223. Residues Val224–Phe236 form a helical membrane-spanning segment. Topologically, residues Ile237–His253 are cytoplasmic. Residues Val254 to Ala272 traverse the membrane as a helical segment. Over Gly273–Ser286 the chain is Periplasmic. Residues Ile287–Leu310 traverse the membrane as a helical segment. The Cytoplasmic segment spans residues Ala311 to Phe339. The chain crosses the membrane as a helical span at residues Thr340–Phe350. The Periplasmic segment spans residues Gly351–Leu357. A helical transmembrane segment spans residues Ile358–Leu380. Residues Arg381 to Val388 lie on the Cytoplasmic side of the membrane.

This sequence belongs to the NhaA Na(+)/H(+) (TC 2.A.33) antiporter family.

It localises to the cell inner membrane. It carries out the reaction Na(+)(in) + 2 H(+)(out) = Na(+)(out) + 2 H(+)(in). Its function is as follows. Na(+)/H(+) antiporter that extrudes sodium in exchange for external protons. In Escherichia coli O6:K15:H31 (strain 536 / UPEC), this protein is Na(+)/H(+) antiporter NhaA.